Reading from the N-terminus, the 227-residue chain is Cytochrome c oxidase subunit 2 (227 aa).

Residues 1–14 lie on the Mitochondrial intermembrane side of the membrane; the sequence is MAYSFQLGLQDATS. A helical membrane pass occupies residues 15–45; sequence PIMEELMNFHDHTLMIVFLISSLVLYIISLM. Topologically, residues 46–59 are mitochondrial matrix; sequence LTTKLTHTSTMDAQ. The helical transmembrane segment at 60-87 threads the bilayer; the sequence is EVETIWTILPAVILIMIALPSLRILYMM. Residues 88 to 227 are Mitochondrial intermembrane-facing; the sequence is DEINNPVLTV…HFENWSASMI (140 aa). His161, Cys196, Glu198, Cys200, His204, and Met207 together coordinate Cu cation. Position 198 (Glu198) interacts with Mg(2+).

It belongs to the cytochrome c oxidase subunit 2 family. Component of the cytochrome c oxidase (complex IV, CIV), a multisubunit enzyme composed of 14 subunits. The complex is composed of a catalytic core of 3 subunits MT-CO1, MT-CO2 and MT-CO3, encoded in the mitochondrial DNA, and 11 supernumerary subunits COX4I, COX5A, COX5B, COX6A, COX6B, COX6C, COX7A, COX7B, COX7C, COX8 and NDUFA4, which are encoded in the nuclear genome. The complex exists as a monomer or a dimer and forms supercomplexes (SCs) in the inner mitochondrial membrane with NADH-ubiquinone oxidoreductase (complex I, CI) and ubiquinol-cytochrome c oxidoreductase (cytochrome b-c1 complex, complex III, CIII), resulting in different assemblies (supercomplex SCI(1)III(2)IV(1) and megacomplex MCI(2)III(2)IV(2)). Found in a complex with TMEM177, COA6, COX18, COX20, SCO1 and SCO2. Interacts with TMEM177 in a COX20-dependent manner. Interacts with COX20. Interacts with COX16. Cu cation serves as cofactor.

The protein localises to the mitochondrion inner membrane. The catalysed reaction is 4 Fe(II)-[cytochrome c] + O2 + 8 H(+)(in) = 4 Fe(III)-[cytochrome c] + 2 H2O + 4 H(+)(out). In terms of biological role, component of the cytochrome c oxidase, the last enzyme in the mitochondrial electron transport chain which drives oxidative phosphorylation. The respiratory chain contains 3 multisubunit complexes succinate dehydrogenase (complex II, CII), ubiquinol-cytochrome c oxidoreductase (cytochrome b-c1 complex, complex III, CIII) and cytochrome c oxidase (complex IV, CIV), that cooperate to transfer electrons derived from NADH and succinate to molecular oxygen, creating an electrochemical gradient over the inner membrane that drives transmembrane transport and the ATP synthase. Cytochrome c oxidase is the component of the respiratory chain that catalyzes the reduction of oxygen to water. Electrons originating from reduced cytochrome c in the intermembrane space (IMS) are transferred via the dinuclear copper A center (CU(A)) of subunit 2 and heme A of subunit 1 to the active site in subunit 1, a binuclear center (BNC) formed by heme A3 and copper B (CU(B)). The BNC reduces molecular oxygen to 2 water molecules using 4 electrons from cytochrome c in the IMS and 4 protons from the mitochondrial matrix. This Praomys jacksoni (African forest rat) protein is Cytochrome c oxidase subunit 2 (MT-CO2).